The sequence spans 727 residues: Elongation factor 2 (727 aa).

Residues 19–260 enclose the tr-type G domain; that stretch reads DQIRNMGICA…MAIKHLPNPL (242 aa). GTP contacts are provided by residues 28–35, 94–98, and 148–151; these read AHIDHGKT, DTPGH, and NKVD. H603 bears the Diphthamide mark.

Belongs to the TRAFAC class translation factor GTPase superfamily. Classic translation factor GTPase family. EF-G/EF-2 subfamily.

The protein localises to the cytoplasm. Catalyzes the GTP-dependent ribosomal translocation step during translation elongation. During this step, the ribosome changes from the pre-translocational (PRE) to the post-translocational (POST) state as the newly formed A-site-bound peptidyl-tRNA and P-site-bound deacylated tRNA move to the P and E sites, respectively. Catalyzes the coordinated movement of the two tRNA molecules, the mRNA and conformational changes in the ribosome. The polypeptide is Elongation factor 2 (Methanococcus maripaludis (strain C7 / ATCC BAA-1331)).